Here is a 653-residue protein sequence, read N- to C-terminus: Sodium-dependent phosphate transporter 2 (653 aa).

A topological domain (extracellular) is located at residue methionine 1. Residues 2 to 22 traverse the membrane as a helical segment; it reads VLVEYLWMVIVGFIIAFILAF. Residues 23–46 lie on the Cytoplasmic side of the membrane; it reads SVGANDVANSFGTAVGSGVVTLRQ. A helical membrane pass occupies residues 47-67; that stretch reads ACILASIFETTGSVLLGAKVG. The Extracellular portion of the chain corresponds to 68 to 86; it reads ETIRKGIIDVNLYNNTVDL. N-linked (GlcNAc...) asparagine glycosylation is present at asparagine 81. Residues 87-107 traverse the membrane as a helical segment; it reads LMAGEVSAMVGSAVWQLIASF. The Cytoplasmic segment spans residues 108-109; it reads LR. A helical membrane pass occupies residues 110–130; sequence LPISGTHCIVGATIGFSLVAI. Residues 131 to 142 are Extracellular-facing; the sequence is GTHGVQWMQLVK. Residues 143–163 traverse the membrane as a helical segment; it reads IVASWFISPLLSGLMSGALFL. Residues 164–187 are Cytoplasmic-facing; that stretch reads MIKFFILKKEDPVPNGLKALPVFY. The helical transmembrane segment at 188–208 threads the bilayer; the sequence is AATIGINVFSILYTGAPLLGL. Residues 209–217 are Extracellular-facing; it reads ESFPVWATA. A helical transmembrane segment spans residues 218 to 238; sequence LLSIGIAIIFALIVWFFVCPW. The Cytoplasmic segment spans residues 239 to 483; that stretch reads MKKKIASRLK…EDKEEKDKSE (245 aa). Residues 484 to 504 traverse the membrane as a helical segment; it reads VHLLFHFLQILTACFGSFAHG. Over 505 to 532 the chain is Extracellular; that stretch reads GNDVSNAIGPLVALWLIYEQGGVMQEAS. A helical transmembrane segment spans residues 533–553; that stretch reads TPVWLLLYGGVGICAGLWVWG. Residues 554 to 572 are Cytoplasmic-facing; it reads RRVIQTMGKDLTPITPSSG. A helical transmembrane segment spans residues 573–587; that stretch reads FTIELASAFTVVVAS. The Extracellular portion of the chain corresponds to 588-594; it reads NIGLPIS. Residues 595 to 610 form a helical membrane-spanning segment; sequence TTHCKVGSVVAVGWIR. The Cytoplasmic portion of the chain corresponds to 611-622; sequence SRKAVDWRLFRN. A helical membrane pass occupies residues 623 to 643; sequence IFLAWFVTVPVAGLFSAGVMA. Topologically, residues 644–653 are extracellular; it reads ILQYGILPYV.

Belongs to the inorganic phosphate transporter (PiT) (TC 2.A.20) family. In terms of assembly, homodimer.

The protein resides in the cell membrane. Its subcellular location is the apical cell membrane. The enzyme catalyses 2 Na(+)(out) + phosphate(out) = 2 Na(+)(in) + phosphate(in). Its function is as follows. Sodium-phosphate symporter which preferentially transports the monovalent form of phosphate with a stoichiometry of two sodium ions per phosphate ion. The polypeptide is Sodium-dependent phosphate transporter 2 (slc20a2) (Xenopus tropicalis (Western clawed frog)).